Reading from the N-terminus, the 323-residue chain is NADH-ubiquinone oxidoreductase chain 1 (323 aa).

Transmembrane regions (helical) follow at residues 10 to 30 (LLYI…GLLI), 52 to 72 (PNVV…KLVL), 84 to 104 (IIYA…WSVI), 119 to 139 (VIFI…AGWA), 157 to 177 (VSYE…AGTV), 189 to 209 (VWFI…ALAE), 245 to 265 (YANI…GIVS), 268 to 288 (ISGA…RATL), and 302 to 322 (KSLL…VLII).

The protein belongs to the complex I subunit 1 family.

It localises to the mitochondrion inner membrane. It catalyses the reaction a ubiquinone + NADH + 5 H(+)(in) = a ubiquinol + NAD(+) + 4 H(+)(out). Functionally, core subunit of the mitochondrial membrane respiratory chain NADH dehydrogenase (Complex I) that is believed to belong to the minimal assembly required for catalysis. Complex I functions in the transfer of electrons from NADH to the respiratory chain. The immediate electron acceptor for the enzyme is believed to be ubiquinone. The chain is NADH-ubiquinone oxidoreductase chain 1 (nad1) from Dictyostelium citrinum (Slime mold).